We begin with the raw amino-acid sequence, 127 residues long: Glycine cleavage system H protein (127 aa).

Residues 22–103 form the Lipoyl-binding domain; it reads EAYIGITDFA…AFANWIIKVE (82 aa). Lys63 is modified (N6-lipoyllysine).

The protein belongs to the GcvH family. The glycine cleavage system is composed of four proteins: P, T, L and H. It depends on (R)-lipoate as a cofactor.

The glycine cleavage system catalyzes the degradation of glycine. The H protein shuttles the methylamine group of glycine from the P protein to the T protein. This is Glycine cleavage system H protein from Alkaliphilus oremlandii (strain OhILAs) (Clostridium oremlandii (strain OhILAs)).